A 232-amino-acid chain; its full sequence is Small ribosomal subunit protein uS3 (232 aa).

The KH type-2 domain maps to 39–107; it reads VRQFLTKELA…PAQINIAEVR (69 aa).

It belongs to the universal ribosomal protein uS3 family. In terms of assembly, part of the 30S ribosomal subunit. Forms a tight complex with proteins S10 and S14.

In terms of biological role, binds the lower part of the 30S subunit head. Binds mRNA in the 70S ribosome, positioning it for translation. The protein is Small ribosomal subunit protein uS3 of Yersinia pseudotuberculosis serotype O:1b (strain IP 31758).